A 148-amino-acid chain; its full sequence is Homoprotocatechuate degradative operon repressor (148 aa).

Positions 2 to 134 (HDSLTIALLQ…LTHLLEEFIA (133 aa)) constitute an HTH marR-type domain.

Functionally, repressor for the homoprotocatechuate catabolic pathway hpc operon. This Escherichia coli protein is Homoprotocatechuate degradative operon repressor (hpcR).